We begin with the raw amino-acid sequence, 304 residues long: Uricase (304 aa).

The residue at position 2 (A2) is an N-acetylalanine. 2 positions are modified to N6-acetyllysine; alternate: K10 and K23. An N6-succinyllysine; alternate mark is found at K10 and K23. Catalysis depends on K23, which acts as the Charge relay system. An N6-acetyllysine mark is found at K27 and K36. Phosphoserine is present on residues S39 and S63. T68 serves as the catalytic Charge relay system. Urate-binding residues include T68 and D69. N6-acetyllysine occurs at positions 118, 122, and 164. F170 contributes to the urate binding site. N6-acetyllysine occurs at positions 175 and 185. Residue R187 coordinates urate. 2 positions are modified to N6-acetyllysine; alternate: K221 and K228. An N6-succinyllysine; alternate mark is found at K221 and K228. Phosphoserine is present on S232. 3 residues coordinate urate: V235, Q236, and N262. Catalysis depends on H264, which acts as the Charge relay system. K278 carries the post-translational modification N6-acetyllysine. Phosphotyrosine is present on Y289. The Microbody targeting signal motif lies at 302-304; the sequence is SRL.

Belongs to the uricase family.

Its subcellular location is the peroxisome. It carries out the reaction urate + O2 + H2O = 5-hydroxyisourate + H2O2. It functions in the pathway purine metabolism; urate degradation; (S)-allantoin from urate: step 1/3. In terms of biological role, catalyzes the oxidation of uric acid to 5-hydroxyisourate, which is further processed to form (S)-allantoin. This Macaca mulatta (Rhesus macaque) protein is Uricase (UOX).